Here is an 865-residue protein sequence, read N- to C-terminus: Leucine--tRNA ligase (865 aa).

The 'HIGH' region motif lies at 48–58 (PYPSGQLHVGH). The short motif at 626 to 630 (KMSKS) is the 'KMSKS' region element. Lys629 contacts ATP.

The protein belongs to the class-I aminoacyl-tRNA synthetase family.

It localises to the cytoplasm. The enzyme catalyses tRNA(Leu) + L-leucine + ATP = L-leucyl-tRNA(Leu) + AMP + diphosphate. The chain is Leucine--tRNA ligase from Gluconobacter oxydans (strain 621H) (Gluconobacter suboxydans).